The primary structure comprises 51 residues: Large ribosomal subunit protein eL39 (51 aa).

It belongs to the eukaryotic ribosomal protein eL39 family.

This Methanopyrus kandleri (strain AV19 / DSM 6324 / JCM 9639 / NBRC 100938) protein is Large ribosomal subunit protein eL39.